The following is a 74-amino-acid chain: Large ribosomal subunit protein bL31 (74 aa).

The protein belongs to the bacterial ribosomal protein bL31 family. Type A subfamily. As to quaternary structure, part of the 50S ribosomal subunit.

Its function is as follows. Binds the 23S rRNA. This Synechococcus sp. (strain JA-2-3B'a(2-13)) (Cyanobacteria bacterium Yellowstone B-Prime) protein is Large ribosomal subunit protein bL31.